The chain runs to 149 residues: Transcriptional repressor NrdR (149 aa).

Residues 3 to 34 (CPFCAAVDTKVIDSRLVSDGSQVRRRRQCLDC) fold into a zinc finger. Residues 49-139 (PRVIKSDEVR…VYRSFEDVRE (91 aa)) enclose the ATP-cone domain.

The protein belongs to the NrdR family. It depends on Zn(2+) as a cofactor.

Negatively regulates transcription of bacterial ribonucleotide reductase nrd genes and operons by binding to NrdR-boxes. This is Transcriptional repressor NrdR from Yersinia pseudotuberculosis serotype O:1b (strain IP 31758).